The following is a 349-amino-acid chain: MGNPRSPLDRRLRFRNVPFLPPRIAASSTTTARSLKAKTMEMRFTIAWMWFPSVLLILGLLTPPSNGCTVDVGRNVSIREQCRLRNGATFSKGDIEGNFSGPVVVELDYEDIDITGERQRLRFHLSGLGCPTKENIRKDNESDVNGGIRWALYIQTGDAKYGIRNQHLSIRLMYPGEKNTQQLLGSDFSCERHRRPSTPLGKNAEVPPATRTSSTYGVLSAFVVWIGSGLNIIWWTGIVLLAADALGLGERWLRLALSHRDKHHASRTAALQCQRDMLLRQRRRARRLHAVSEGKLQEEKKRQSALVWNVEARPFPSTHQLIVLPPPVASAPPAVPSQPPEYSSVFPPV.

The helical transmembrane segment at 221 to 241 (AFVVWIGSGLNIIWWTGIVLL) threads the bilayer. Over residues 328–339 (VASAPPAVPSQP) the composition is skewed to pro residues. A disordered region spans residues 328–349 (VASAPPAVPSQPPEYSSVFPPV).

The protein resides in the host membrane. This is an uncharacterized protein from Human cytomegalovirus (strain Merlin) (HHV-5).